The primary structure comprises 902 residues: Histone-lysine N-methyltransferase CLF (902 aa).

Residues 1–14 (MASEASPSSSATRS) are compositionally biased toward low complexity. Disordered regions lie at residues 1–33 (MASE…KEVS), 73–107 (SMER…SNNN), and 335–522 (GKTG…FMGE). Basic and acidic residues-rich tracts occupy residues 15–33 (EPPK…KEVS) and 78–95 (GSCK…RDSP). The segment covering 337-357 (TGTSSDGAGTKTTPTKFSSKL) has biased composition (polar residues). The span at 394–403 (DKVSSSPKVK) shows a compositional bias: low complexity. Basic residues predominate over residues 404-416 (GSGRRVGRKRNKN). A compositionally biased stretch (low complexity) spans 438–449 (SDSIASGSCSPS). Residues 459 to 473 (ATSSSQKHVKSGNSG) show a composition bias toward polar residues. The SANT domain maps to 531-581 (TNKLWRPLEKSLFDKGVEIFGMNSCLIARNLLSGFKSCWEVFQYMTCSENK). Positions 638–737 (RKRITEKKDQ…SLGVPSQRGD (100 aa)) constitute a CXC domain. The SET domain occupies 752-867 (QRVLLGISDV…AGEELFYDYR (116 aa)). Tyr-866 is an S-adenosyl-L-methionine binding site. Basic and acidic residues predominate over residues 875–890 (AWAKKPEAPGSKKDEN). The segment at 875-902 (AWAKKPEAPGSKKDENVTPSVGRPKKLA) is disordered.

This sequence belongs to the class V-like SAM-binding methyltransferase superfamily. Histone-lysine methyltransferase family. EZ subfamily. As to quaternary structure, probable component of a PcG complex. In plants, PcG complexes are probably composed of a member of the EZ family (CLF or MEA), FIE, and a member of the VEFS family (FIS2, VRN2 or EMF2). Interacts with FIE. Interacts with RING1A. Binds to ALP1. Interacts with BLI. Binds to ATX1 in the nucleus. Interacts with EOL1. Interacts (via SANT domain) with HXK1 in the nucleus. In terms of tissue distribution, strongly expressed throughout the apical meristem, leaf primordia, and leaves of 7-8 day-old seedling. Weakly expressed in the vasculature of hypocotyl. Strongly expressed throughout the young stages 1 and 2 floral meristems that arose on the flanks of the apex. In stage 3 and 4 flowers, it is expressed in the emerging sepal primordia and in the dome of the floral meristem. During stages 6 and 7, it is strongly expressed in developing petal and stamen, and weakly expressed in the sepals. Late in floral development, at stage 12, it is weakly expressed in all floral whorls, and expressed at intermediate level in petals and ovules.

It localises to the nucleus. It carries out the reaction L-lysyl-[histone] + S-adenosyl-L-methionine = N(6)-methyl-L-lysyl-[histone] + S-adenosyl-L-homocysteine + H(+). Functionally, polycomb group (PcG) protein. Catalytic subunit of some PcG multiprotein complex, which methylates 'Lys-27' of histone H3, leading to transcriptional repression of the affected target genes, mainly abscisic acid (ABA) responsive elements. Required to regulate floral development by repressing the AGAMOUS homeotic gene in leaves, inflorescence stems and flowers. Together with ATX1, modulates AG nucleosome methylation statement. Regulates the antero-posterior organization of the endosperm, as well as the division and elongation rates of leaf cells. PcG proteins act by forming multiprotein complexes, which are required to maintain the transcriptionally repressive state of homeotic genes throughout development. PcG proteins are not required to initiate repression, but to maintain it during later stages of development. Forms a nuclear complex with EZA1/SWN and HXK1 to target common glucose-responsive genes and regulate glucose signaling by glucose-mediated gene repression. Affects the recruitment of HXK1 to the target chromatin. In Arabidopsis thaliana (Mouse-ear cress), this protein is Histone-lysine N-methyltransferase CLF.